The primary structure comprises 193 residues: Acyl carrier protein phosphodiesterase (193 aa).

It belongs to the AcpH family.

The catalysed reaction is holo-[ACP] + H2O = apo-[ACP] + (R)-4'-phosphopantetheine + H(+). Functionally, converts holo-ACP to apo-ACP by hydrolytic cleavage of the phosphopantetheine prosthetic group from ACP. This chain is Acyl carrier protein phosphodiesterase, found in Shigella boydii serotype 4 (strain Sb227).